A 111-amino-acid chain; its full sequence is Cryptic phage CTXphi transcriptional repressor RstR (111 aa).

Residues 6–60 form the HTH cro/C1-type domain; sequence IRDLRVERDLNQEEVANGIGVGKNTYLAYEKGTQSPKLETVEKLAKFYGVPIAEL. Residues 17-36 constitute a DNA-binding region (H-T-H motif); sequence QEEVANGIGVGKNTYLAYEK.

Functionally, transcriptional repressor of the integrated CTXPhi phage gene rstA2. The polypeptide is Cryptic phage CTXphi transcriptional repressor RstR (rstR) (Vibrio cholerae).